Consider the following 229-residue polypeptide: Triosephosphate isomerase (229 aa).

9–11 (NYK) contributes to the substrate binding site. The active-site Electrophile is the histidine 93. Residue glutamate 141 is the Proton acceptor of the active site. Substrate-binding positions include isoleucine 146, glycine 180, and 201 to 202 (AS).

This sequence belongs to the triosephosphate isomerase family. In terms of assembly, homotetramer; dimer of dimers.

The protein localises to the cytoplasm. It catalyses the reaction D-glyceraldehyde 3-phosphate = dihydroxyacetone phosphate. It participates in carbohydrate biosynthesis; gluconeogenesis. The protein operates within carbohydrate degradation; glycolysis; D-glyceraldehyde 3-phosphate from glycerone phosphate: step 1/1. Involved in the gluconeogenesis. Catalyzes stereospecifically the conversion of dihydroxyacetone phosphate (DHAP) to D-glyceraldehyde-3-phosphate (G3P). The sequence is that of Triosephosphate isomerase from Sulfurisphaera tokodaii (strain DSM 16993 / JCM 10545 / NBRC 100140 / 7) (Sulfolobus tokodaii).